Here is a 385-residue protein sequence, read N- to C-terminus: Probable caffeine synthase 4 (385 aa).

S-adenosyl-L-homocysteine is bound by residues Tyr18, Cys62, Asn67, Asp101, Leu102, Ser140, and Phe141. Residues Tyr158, Gln161, and Phe162 each contribute to the caffeine site. A Mg(2+)-binding site is contributed by Asn179. Thr238 contributes to the caffeine binding site. The Mg(2+) site is built by Asp261, Phe263, and Asn264. Tyr369 provides a ligand contact to caffeine.

Belongs to the methyltransferase superfamily. Type-7 methyltransferase family. It depends on Mg(2+) as a cofactor. In terms of tissue distribution, expressed in roots, stems, young and old leaves.

It participates in alkaloid biosynthesis. Functionally, may be involved in the biosynthesis of caffeine. This is Probable caffeine synthase 4 from Coffea arabica (Arabian coffee).